Reading from the N-terminus, the 590-residue chain is Multidrug resistance-like ATP-binding protein MdlA (590 aa).

In terms of domain architecture, ABC transmembrane type-1 spans 18–303; it reads YLGAVALLVI…LAWMFNIVER (286 aa). Helical transmembrane passes span 23 to 43, 53 to 73, 134 to 154, 155 to 175, 248 to 268, and 280 to 300; these read ALLVIIAMLQLVPPKVVGIVV, TGQILMWIATMVLIAVVVYLL, GVLTLVDSLVMGCAVLIMMST, QISWQLTLFSLLPMPVMAIMI, IYIAIGMANLLAIGGGSWMVV, and FMMYLGLMIWPMLALAWMFNI. Residues 337–570 form the ABC transporter domain; it reads VNIHQFTYPQ…SGWYRDMYRY (234 aa). 369 to 376 is a binding site for ATP; sequence GPTGSGKS.

This sequence belongs to the ABC transporter superfamily. Drug exporter-2 (TC 3.A.1.117) family.

The protein localises to the cell inner membrane. The catalysed reaction is ATP + H2O + xenobioticSide 1 = ADP + phosphate + xenobioticSide 2.. This is Multidrug resistance-like ATP-binding protein MdlA (mdlA) from Escherichia coli (strain K12).